The chain runs to 271 residues: Virulence regulon transcriptional activator VirF (271 aa).

An HTH araC/xylS-type domain is found at 167–265 (ERLQKFMEEN…GCTPSQARLT (99 aa)). 2 consecutive DNA-binding regions (H-T-H motif) follow at residues 184–205 (SKFAREFGMGLTTFKELFGTVY) and 232–255 (IVDIAMEAGFSSQSYFTQSYRRRF).

In terms of biological role, transcriptional activator of the Yersinia virulence regulon. The polypeptide is Virulence regulon transcriptional activator VirF (virF) (Yersinia enterocolitica serotype O:8 / biotype 1B (strain NCTC 13174 / 8081)).